Here is a 431-residue protein sequence, read N- to C-terminus: Glutamate--tRNA ligase 1 (431 aa).

Positions Pro6–Asn16 match the 'HIGH' region motif. The 'KMSKS' region motif lies at Lys235–Arg239. Lys238 is a binding site for ATP.

It belongs to the class-I aminoacyl-tRNA synthetase family. Glutamate--tRNA ligase type 1 subfamily. As to quaternary structure, monomer.

Its subcellular location is the cytoplasm. The enzyme catalyses tRNA(Glu) + L-glutamate + ATP = L-glutamyl-tRNA(Glu) + AMP + diphosphate. In terms of biological role, catalyzes the attachment of glutamate to tRNA(Glu) in a two-step reaction: glutamate is first activated by ATP to form Glu-AMP and then transferred to the acceptor end of tRNA(Glu). The sequence is that of Glutamate--tRNA ligase 1 from Campylobacter curvus (strain 525.92).